The following is a 170-amino-acid chain: Cyclic pyranopterin monophosphate synthase (170 aa).

Substrate is bound by residues 75–77 (LCH) and 113–114 (ME). D128 is an active-site residue.

This sequence belongs to the MoaC family. Homohexamer; trimer of dimers.

It carries out the reaction (8S)-3',8-cyclo-7,8-dihydroguanosine 5'-triphosphate = cyclic pyranopterin phosphate + diphosphate. Its pathway is cofactor biosynthesis; molybdopterin biosynthesis. Functionally, catalyzes the conversion of (8S)-3',8-cyclo-7,8-dihydroguanosine 5'-triphosphate to cyclic pyranopterin monophosphate (cPMP). The protein is Cyclic pyranopterin monophosphate synthase of Pelotomaculum thermopropionicum (strain DSM 13744 / JCM 10971 / SI).